We begin with the raw amino-acid sequence, 204 residues long: GTP cyclohydrolase-2 (204 aa).

49-53 (RIHSE) is a GTP binding site. Zn(2+) is bound by residues cysteine 54, cysteine 65, and cysteine 67. Residues glutamine 70, 92–94 (EGR), and threonine 114 each bind GTP. The Proton acceptor role is filled by aspartate 126. Arginine 128 functions as the Nucleophile in the catalytic mechanism. Residues threonine 149 and lysine 154 each coordinate GTP.

Belongs to the GTP cyclohydrolase II family. The cofactor is Zn(2+).

The catalysed reaction is GTP + 4 H2O = 2,5-diamino-6-hydroxy-4-(5-phosphoribosylamino)-pyrimidine + formate + 2 phosphate + 3 H(+). It functions in the pathway cofactor biosynthesis; riboflavin biosynthesis; 5-amino-6-(D-ribitylamino)uracil from GTP: step 1/4. Its function is as follows. Catalyzes the conversion of GTP to 2,5-diamino-6-ribosylamino-4(3H)-pyrimidinone 5'-phosphate (DARP), formate and pyrophosphate. The chain is GTP cyclohydrolase-2 from Shewanella baltica (strain OS223).